We begin with the raw amino-acid sequence, 247 residues long: tRNA (guanine-N(1)-)-methyltransferase (247 aa).

S-adenosyl-L-methionine is bound by residues Gly-115 and 134-139 (IGDFVL).

It belongs to the RNA methyltransferase TrmD family. In terms of assembly, homodimer.

The protein resides in the cytoplasm. The catalysed reaction is guanosine(37) in tRNA + S-adenosyl-L-methionine = N(1)-methylguanosine(37) in tRNA + S-adenosyl-L-homocysteine + H(+). Functionally, specifically methylates guanosine-37 in various tRNAs. The chain is tRNA (guanine-N(1)-)-methyltransferase from Anaeromyxobacter dehalogenans (strain 2CP-C).